The following is a 391-amino-acid chain: Nicotinate phosphoribosyltransferase (391 aa).

A Phosphohistidine; by autocatalysis modification is found at histidine 216.

This sequence belongs to the NAPRTase family. Post-translationally, transiently phosphorylated on a His residue during the reaction cycle. Phosphorylation strongly increases the affinity for substrates and increases the rate of nicotinate D-ribonucleotide production. Dephosphorylation regenerates the low-affinity form of the enzyme, leading to product release.

The catalysed reaction is nicotinate + 5-phospho-alpha-D-ribose 1-diphosphate + ATP + H2O = nicotinate beta-D-ribonucleotide + ADP + phosphate + diphosphate. It functions in the pathway cofactor biosynthesis; NAD(+) biosynthesis; nicotinate D-ribonucleotide from nicotinate: step 1/1. Catalyzes the synthesis of beta-nicotinate D-ribonucleotide from nicotinate and 5-phospho-D-ribose 1-phosphate at the expense of ATP. This is Nicotinate phosphoribosyltransferase from Bordetella petrii (strain ATCC BAA-461 / DSM 12804 / CCUG 43448).